Here is a 355-residue protein sequence, read N- to C-terminus: 3-dehydroquinate synthase (355 aa).

NAD(+) is bound by residues 106 to 110, 130 to 131, Lys-143, and Lys-152; these read GVVGD and TS. Zn(2+) contacts are provided by Glu-185, His-246, and His-262.

This sequence belongs to the sugar phosphate cyclases superfamily. Dehydroquinate synthase family. It depends on Co(2+) as a cofactor. The cofactor is Zn(2+). Requires NAD(+) as cofactor.

The protein localises to the cytoplasm. The enzyme catalyses 7-phospho-2-dehydro-3-deoxy-D-arabino-heptonate = 3-dehydroquinate + phosphate. It functions in the pathway metabolic intermediate biosynthesis; chorismate biosynthesis; chorismate from D-erythrose 4-phosphate and phosphoenolpyruvate: step 2/7. Its function is as follows. Catalyzes the conversion of 3-deoxy-D-arabino-heptulosonate 7-phosphate (DAHP) to dehydroquinate (DHQ). In Latilactobacillus sakei subsp. sakei (strain 23K) (Lactobacillus sakei subsp. sakei), this protein is 3-dehydroquinate synthase.